The chain runs to 444 residues: Protein Z-dependent protease inhibitor (444 aa).

The first 21 residues, 1–21, serve as a signal peptide directing secretion; that stretch reads MKVVPSLLLSVLLAQVWLVPG. The segment at 24–65 is disordered; it reads PSPQSPETPAPQNQTSRVVQAPKEEEEDEQEASEEKASEEEK. N36 carries an N-linked (GlcNAc...) asparagine glycan. The residue at position 56 (S56) is a Phosphoserine; by FAM20C. Residues 56–65 are compositionally biased toward basic and acidic residues; that stretch reads SEEKASEEEK. The segment at 136-153 is heparin-binding; it reads TKPGLLPSLFKGLRETLS. N-linked (GlcNAc...) asparagine glycans are attached at residues N180, N197, and N295.

It belongs to the serpin family. Interacts with PROZ. Post-translationally, phosphorylated by FAM20C in the extracellular medium. Expressed by the liver and secreted in plasma.

The protein resides in the secreted. Its function is as follows. Inhibits activity of the coagulation protease factor Xa in the presence of PROZ, calcium and phospholipids. Also inhibits factor XIa in the absence of cofactors. The sequence is that of Protein Z-dependent protease inhibitor (SERPINA10) from Homo sapiens (Human).